The following is a 616-amino-acid chain: Dihydroxy-acid dehydratase (616 aa).

Residue D81 participates in Mg(2+) binding. C122 contributes to the [2Fe-2S] cluster binding site. Mg(2+)-binding residues include D123 and K124. K124 carries the post-translational modification N6-carboxylysine. C195 contacts [2Fe-2S] cluster. E491 is a binding site for Mg(2+). The active-site Proton acceptor is S517.

Belongs to the IlvD/Edd family. Homodimer. [2Fe-2S] cluster is required as a cofactor. Requires Mg(2+) as cofactor.

It carries out the reaction (2R)-2,3-dihydroxy-3-methylbutanoate = 3-methyl-2-oxobutanoate + H2O. The enzyme catalyses (2R,3R)-2,3-dihydroxy-3-methylpentanoate = (S)-3-methyl-2-oxopentanoate + H2O. It participates in amino-acid biosynthesis; L-isoleucine biosynthesis; L-isoleucine from 2-oxobutanoate: step 3/4. The protein operates within amino-acid biosynthesis; L-valine biosynthesis; L-valine from pyruvate: step 3/4. In terms of biological role, functions in the biosynthesis of branched-chain amino acids. Catalyzes the dehydration of (2R,3R)-2,3-dihydroxy-3-methylpentanoate (2,3-dihydroxy-3-methylvalerate) into 2-oxo-3-methylpentanoate (2-oxo-3-methylvalerate) and of (2R)-2,3-dihydroxy-3-methylbutanoate (2,3-dihydroxyisovalerate) into 2-oxo-3-methylbutanoate (2-oxoisovalerate), the penultimate precursor to L-isoleucine and L-valine, respectively. This is Dihydroxy-acid dehydratase from Salmonella heidelberg (strain SL476).